The primary structure comprises 188 residues: MPVSIPNREEILADWEAHPMRRPRIQKVTINIGVGESGERLTKAEIMLQRLTGQKPIRRKAKKTNRDFGIRRGEPIAVKVTLRGPKAYEMLKRLLAAVDYKLKASSFDEHGNVCFGIEEHINIPGVEYDPEIGIFGMDVCVTLERPGFRVARRKRKRARIPTRHKLTKEEGMLYMMEEFGVEIVEEEG.

This sequence belongs to the universal ribosomal protein uL5 family. In terms of assembly, part of the 50S ribosomal subunit; contacts the 5S rRNA and probably tRNA. Forms a bridge to the 30S subunit in the 70S ribosome.

Its function is as follows. This is one of the proteins that bind and probably mediate the attachment of the 5S RNA into the large ribosomal subunit, where it forms part of the central protuberance. In the 70S ribosome it contacts protein S13 of the 30S subunit (bridge B1b), connecting the 2 subunits; this bridge is implicated in subunit movement. May contact the P site tRNA; the 5S rRNA and some of its associated proteins might help stabilize positioning of ribosome-bound tRNAs. The sequence is that of Large ribosomal subunit protein uL5 from Pyrococcus horikoshii (strain ATCC 700860 / DSM 12428 / JCM 9974 / NBRC 100139 / OT-3).